An 819-amino-acid polypeptide reads, in one-letter code: Probable phosphoenolpyruvate synthase (819 aa).

H441 (tele-phosphohistidine intermediate) is an active-site residue. Substrate contacts are provided by R540, R587, E684, G706, T707, N708, and D709. E684 provides a ligand contact to Mg(2+). D709 is a binding site for Mg(2+). Catalysis depends on C756, which acts as the Proton donor.

It belongs to the PEP-utilizing enzyme family. Requires Mg(2+) as cofactor.

The catalysed reaction is pyruvate + ATP + H2O = phosphoenolpyruvate + AMP + phosphate + 2 H(+). Its pathway is carbohydrate biosynthesis; gluconeogenesis. Catalyzes the phosphorylation of pyruvate to phosphoenolpyruvate. The sequence is that of Probable phosphoenolpyruvate synthase (ppsA) from Pyrococcus abyssi (strain GE5 / Orsay).